A 174-amino-acid polypeptide reads, in one-letter code: RNA pyrophosphohydrolase (174 aa).

Residues G6–Q145 enclose the Nudix hydrolase domain. Positions G38–G59 match the Nudix box motif.

The protein belongs to the Nudix hydrolase family. RppH subfamily. It depends on a divalent metal cation as a cofactor.

Functionally, accelerates the degradation of transcripts by removing pyrophosphate from the 5'-end of triphosphorylated RNA, leading to a more labile monophosphorylated state that can stimulate subsequent ribonuclease cleavage. The chain is RNA pyrophosphohydrolase from Acidithiobacillus ferrooxidans (strain ATCC 53993 / BNL-5-31) (Leptospirillum ferrooxidans (ATCC 53993)).